A 177-amino-acid polypeptide reads, in one-letter code: Peptide methionine sulfoxide reductase MsrA (177 aa).

Residue Cys-11 is part of the active site.

It belongs to the MsrA Met sulfoxide reductase family.

It carries out the reaction L-methionyl-[protein] + [thioredoxin]-disulfide + H2O = L-methionyl-(S)-S-oxide-[protein] + [thioredoxin]-dithiol. The enzyme catalyses [thioredoxin]-disulfide + L-methionine + H2O = L-methionine (S)-S-oxide + [thioredoxin]-dithiol. Its function is as follows. Has an important function as a repair enzyme for proteins that have been inactivated by oxidation. Catalyzes the reversible oxidation-reduction of methionine sulfoxide in proteins to methionine. The protein is Peptide methionine sulfoxide reductase MsrA of Picrophilus torridus (strain ATCC 700027 / DSM 9790 / JCM 10055 / NBRC 100828 / KAW 2/3).